The chain runs to 469 residues: Glutamate--tRNA ligase (469 aa).

Positions 11-21 (PSPTGFIHLGN) match the 'HIGH' region motif. Over residues 121-131 (PRYDGTWRPEP) the composition is skewed to basic and acidic residues. The segment at 121 to 141 (PRYDGTWRPEPGKVLPEPPPG) is disordered. A 'KMSKS' region motif is present at residues 243 to 247 (KMSKR). Residue Lys246 participates in ATP binding.

This sequence belongs to the class-I aminoacyl-tRNA synthetase family. Glutamate--tRNA ligase type 1 subfamily. As to quaternary structure, monomer.

The protein localises to the cytoplasm. The enzyme catalyses tRNA(Glu) + L-glutamate + ATP = L-glutamyl-tRNA(Glu) + AMP + diphosphate. Catalyzes the attachment of glutamate to tRNA(Glu) in a two-step reaction: glutamate is first activated by ATP to form Glu-AMP and then transferred to the acceptor end of tRNA(Glu). This chain is Glutamate--tRNA ligase, found in Burkholderia multivorans (strain ATCC 17616 / 249).